Reading from the N-terminus, the 259-residue chain is DNA repair protein RecO (259 aa).

Belongs to the RecO family.

In terms of biological role, involved in DNA repair and RecF pathway recombination. The protein is DNA repair protein RecO of Leuconostoc mesenteroides subsp. mesenteroides (strain ATCC 8293 / DSM 20343 / BCRC 11652 / CCM 1803 / JCM 6124 / NCDO 523 / NBRC 100496 / NCIMB 8023 / NCTC 12954 / NRRL B-1118 / 37Y).